Consider the following 106-residue polypeptide: Protein aveugle (106 aa).

Residues 26–91 (WTVSDVLKWY…WREIVKQRLK (66 aa)) enclose the SAM domain.

In terms of assembly, interacts with the SAM domain of cnk.

Its subcellular location is the cytoplasm. It localises to the membrane. In terms of biological role, required for normal photoreceptor differentiation between Ras and Raf for EGFR signaling in the eye and for mitogen-activated protein kinase phosphorylation. Probably acts together with Cnk to promote Raf activation, perhaps by recruiting an activating kinase. In Drosophila melanogaster (Fruit fly), this protein is Protein aveugle (ave).